Consider the following 114-residue polypeptide: Prostate stem cell antigen (114 aa).

The signal sequence occupies residues 1–11 (MAGLALQPGTA). A UPAR/Ly6 domain is found at 12–86 (LLCYSCKAQV…CCDTDLCNAS (75 aa)). 5 disulfides stabilise this stretch: C14–C39, C17–C26, C32–C57, C61–C77, and C78–C83. N31 is a glycosylation site (N-linked (GlcNAc...) asparagine). S86 carries GPI-anchor amidated serine lipidation. The propeptide at 86 to 114 (SGAHALQPAAAILALLPALGLLLWGPGQL) is removed in mature form.

Interacts with CHRNA4. In terms of processing, N-glycosylated. Highly expressed in prostate (basal, secretory and neuroendocrine epithelium cells). Also found in bladder (transitional epithelium), placenta (trophoblasts), stomach (neuroendocrine cells), colon (neuroendocrine cells) and kidney (collecting ducts). Overexpressed in prostate cancers and expression is correlated with tumor stage, grade and androgen-independence. Highly expressed in prostate cancer bone metastases. Expressed in gastric epithelial cells, mainly in the isthmus (at protein level). Not detected in normal intestinal epithelium (at protein level). Expressed in brain cortex; expression is significantly increased in the front cortex of Alzheimer disease patients.

The protein resides in the cell membrane. May be involved in the regulation of cell proliferation. Has a cell-proliferation inhibition activity in vitro. In terms of biological role, may act as a modulator of nicotinic acetylcholine receptors (nAChRs) activity. In vitro inhibits nicotine-induced signaling probably implicating alpha-3:beta-2- or alpha-7-containing nAChRs. The sequence is that of Prostate stem cell antigen (PSCA) from Homo sapiens (Human).